The chain runs to 282 residues: Release factor glutamine methyltransferase (282 aa).

Residues Asp-141, Phe-169, and Asn-186 each coordinate S-adenosyl-L-methionine. 186-189 lines the substrate pocket; sequence NPPY.

It belongs to the protein N5-glutamine methyltransferase family. PrmC subfamily.

The catalysed reaction is L-glutaminyl-[peptide chain release factor] + S-adenosyl-L-methionine = N(5)-methyl-L-glutaminyl-[peptide chain release factor] + S-adenosyl-L-homocysteine + H(+). Functionally, methylates the class 1 translation termination release factors RF1/PrfA and RF2/PrfB on the glutamine residue of the universally conserved GGQ motif. The protein is Release factor glutamine methyltransferase of Mycoplasma mycoides subsp. mycoides SC (strain CCUG 32753 / NCTC 10114 / PG1).